Reading from the N-terminus, the 265-residue chain is 3-methyl-2-oxobutanoate hydroxymethyltransferase (265 aa).

2 residues coordinate Mg(2+): Asp45 and Asp84. 3-methyl-2-oxobutanoate-binding positions include 45–46, Asp84, and Lys114; that span reads DS. Position 116 (Glu116) interacts with Mg(2+). Catalysis depends on Glu183, which acts as the Proton acceptor.

This sequence belongs to the PanB family. In terms of assembly, homodecamer; pentamer of dimers. It depends on Mg(2+) as a cofactor.

It localises to the cytoplasm. The catalysed reaction is 3-methyl-2-oxobutanoate + (6R)-5,10-methylene-5,6,7,8-tetrahydrofolate + H2O = 2-dehydropantoate + (6S)-5,6,7,8-tetrahydrofolate. It functions in the pathway cofactor biosynthesis; (R)-pantothenate biosynthesis; (R)-pantoate from 3-methyl-2-oxobutanoate: step 1/2. In terms of biological role, catalyzes the reversible reaction in which hydroxymethyl group from 5,10-methylenetetrahydrofolate is transferred onto alpha-ketoisovalerate to form ketopantoate. This Salinibacter ruber (strain DSM 13855 / M31) protein is 3-methyl-2-oxobutanoate hydroxymethyltransferase.